The following is a 314-amino-acid chain: tRNA pseudouridine synthase B (314 aa).

His-43 is a substrate binding site. Asp-48 serves as the catalytic Nucleophile. Residues Tyr-76, Tyr-179, and Leu-200 each contribute to the substrate site.

It belongs to the pseudouridine synthase TruB family. Type 1 subfamily.

The catalysed reaction is uridine(55) in tRNA = pseudouridine(55) in tRNA. Its function is as follows. Responsible for synthesis of pseudouridine from uracil-55 in the psi GC loop of transfer RNAs. In Shigella dysenteriae serotype 1 (strain Sd197), this protein is tRNA pseudouridine synthase B.